We begin with the raw amino-acid sequence, 251 residues long: MEKIMSNKFNNKVALITGAGSGIGKSTALLLAQQGVSVVVSDINLEAAQKVVDEIVALGGKAAANKANTAEPEDMKAAVEFAVSTFGALHLAFNNAGILGEVNSTEELSIEGWRRVIDVNLNAVFYSMHYEVPAILAAGGGAIVNTASIAGLIGIQNISGYVAAKHGVTGLTKAAALEYADKGIRINSVHPGYIKTPLIAEFEEAEMVKLHPIGRLGQPEEVAQVVAFLLSDDASFVTGSQYVVDGAYTSK.

NAD(+) contacts are provided by Asp42, Asn95, Tyr161, Lys165, Ile194, and Thr196. Tyr161 serves as the catalytic Proton acceptor.

It belongs to the short-chain dehydrogenases/reductases (SDR) family.

The enzyme catalyses cyclohexanol + NAD(+) = cyclohexanone + NADH + H(+). Its function is as follows. Catalyzes the oxidation of cyclohexanol to cyclohexanone. Required for the conversion of cyclohexanol to adipic acid. This is Cyclohexanol dehydrogenase from Acinetobacter sp. (strain SE19).